A 289-amino-acid chain; its full sequence is 4-diphosphocytidyl-2-C-methyl-D-erythritol kinase (289 aa).

K10 is a catalytic residue. An ATP-binding site is contributed by 95-105 (PVSAGMGGGSA). Residue D137 is part of the active site.

This sequence belongs to the GHMP kinase family. IspE subfamily.

The catalysed reaction is 4-CDP-2-C-methyl-D-erythritol + ATP = 4-CDP-2-C-methyl-D-erythritol 2-phosphate + ADP + H(+). Its pathway is isoprenoid biosynthesis; isopentenyl diphosphate biosynthesis via DXP pathway; isopentenyl diphosphate from 1-deoxy-D-xylulose 5-phosphate: step 3/6. In terms of biological role, catalyzes the phosphorylation of the position 2 hydroxy group of 4-diphosphocytidyl-2C-methyl-D-erythritol. The polypeptide is 4-diphosphocytidyl-2-C-methyl-D-erythritol kinase (Ligilactobacillus salivarius (strain UCC118) (Lactobacillus salivarius)).